The primary structure comprises 897 residues: DNA mismatch repair protein MutS (897 aa).

654–661 (GPNMAGKS) serves as a coordination point for ATP.

This sequence belongs to the DNA mismatch repair MutS family.

This protein is involved in the repair of mismatches in DNA. It is possible that it carries out the mismatch recognition step. This protein has a weak ATPase activity. The chain is DNA mismatch repair protein MutS from Maricaulis maris (strain MCS10) (Caulobacter maris).